We begin with the raw amino-acid sequence, 654 residues long: Smc-like protein Sph3 (654 aa).

2 coiled-coil regions span residues 135–290 and 341–503; these read TDAI…LQTV and IRGT…LTAA.

Belongs to the Sph1/Sph2 family.

In terms of biological role, involved in cell-shape determination. Required for the formation of rods and wild-type-like motility. The sequence is that of Smc-like protein Sph3 from Haloferax volcanii (strain ATCC 29605 / DSM 3757 / JCM 8879 / NBRC 14742 / NCIMB 2012 / VKM B-1768 / DS2) (Halobacterium volcanii).